We begin with the raw amino-acid sequence, 196 residues long: Chromophore lyase CpcS/CpeS 2 (196 aa).

This sequence belongs to the CpcS/CpeS biliprotein lyase family.

In terms of biological role, covalently attaches a chromophore to Cys residue(s) of phycobiliproteins. In Trichodesmium erythraeum (strain IMS101), this protein is Chromophore lyase CpcS/CpeS 2.